The following is a 906-amino-acid chain: Protein translocase subunit SecA (906 aa).

Residues glutamine 87, glycine 105–threonine 109, and aspartate 507 each bind ATP. Positions 890, 892, 901, and 902 each coordinate Zn(2+).

The protein belongs to the SecA family. As to quaternary structure, monomer and homodimer. Part of the essential Sec protein translocation apparatus which comprises SecA, SecYEG and auxiliary proteins SecDF-YajC and YidC. It depends on Zn(2+) as a cofactor.

It is found in the cell inner membrane. The protein resides in the cytoplasm. The catalysed reaction is ATP + H2O + cellular proteinSide 1 = ADP + phosphate + cellular proteinSide 2.. Its function is as follows. Part of the Sec protein translocase complex. Interacts with the SecYEG preprotein conducting channel. Has a central role in coupling the hydrolysis of ATP to the transfer of proteins into and across the cell membrane, serving both as a receptor for the preprotein-SecB complex and as an ATP-driven molecular motor driving the stepwise translocation of polypeptide chains across the membrane. This is Protein translocase subunit SecA from Thiobacillus denitrificans (strain ATCC 25259 / T1).